A 128-amino-acid chain; its full sequence is uncharacterized protein (128 aa).

This is an uncharacterized protein from Vaccinia virus (strain Copenhagen) (VACV).